Reading from the N-terminus, the 134-residue chain is MTISLGFVVAEFNRDLTYQMELLGREHAEFLGATVKETILVPGVFDMPLAIKKLCQRDDIDAVVTIGSVIEGDTDHDQVVMQHAARKIMDLSLEFNKPVTLGIPGPGMTRMAAHERVDYAKRAVEAAVKLVRRL.

Residues F12, 44–46 (VFD), and 68–70 (SVI) contribute to the 5-amino-6-(D-ribitylamino)uracil site. 73-74 (DT) serves as a coordination point for (2S)-2-hydroxy-3-oxobutyl phosphate. The Proton donor role is filled by H76. L101 is a 5-amino-6-(D-ribitylamino)uracil binding site. A (2S)-2-hydroxy-3-oxobutyl phosphate-binding site is contributed by R116.

It belongs to the DMRL synthase family.

It carries out the reaction (2S)-2-hydroxy-3-oxobutyl phosphate + 5-amino-6-(D-ribitylamino)uracil = 6,7-dimethyl-8-(1-D-ribityl)lumazine + phosphate + 2 H2O + H(+). The protein operates within cofactor biosynthesis; riboflavin biosynthesis; riboflavin from 2-hydroxy-3-oxobutyl phosphate and 5-amino-6-(D-ribitylamino)uracil: step 1/2. In terms of biological role, catalyzes the formation of 6,7-dimethyl-8-ribityllumazine by condensation of 5-amino-6-(D-ribitylamino)uracil with 3,4-dihydroxy-2-butanone 4-phosphate. This is the penultimate step in the biosynthesis of riboflavin. This Methanosarcina barkeri (strain Fusaro / DSM 804) protein is 6,7-dimethyl-8-ribityllumazine synthase.